A 257-amino-acid chain; its full sequence is Deoxyribose-phosphate aldolase (257 aa).

Asp102 serves as the catalytic Proton donor/acceptor. Catalysis depends on Lys166, which acts as the Schiff-base intermediate with acetaldehyde. Residue Lys198 is the Proton donor/acceptor of the active site.

The protein belongs to the DeoC/FbaB aldolase family. DeoC type 2 subfamily.

The protein localises to the cytoplasm. It carries out the reaction 2-deoxy-D-ribose 5-phosphate = D-glyceraldehyde 3-phosphate + acetaldehyde. Its pathway is carbohydrate degradation; 2-deoxy-D-ribose 1-phosphate degradation; D-glyceraldehyde 3-phosphate and acetaldehyde from 2-deoxy-alpha-D-ribose 1-phosphate: step 2/2. Its function is as follows. Catalyzes a reversible aldol reaction between acetaldehyde and D-glyceraldehyde 3-phosphate to generate 2-deoxy-D-ribose 5-phosphate. The polypeptide is Deoxyribose-phosphate aldolase (Shewanella frigidimarina (strain NCIMB 400)).